A 242-amino-acid chain; its full sequence is MAAALWGFFPVLLLLLLSGDVQSSEVPGAAAEGSGGSGVGIGDRFKIEGRAVVPGVKPQDWISAARVLVDGEEHVGFLKTDGSFVVHDIPSGSYVVEVVSPAYRFDPVRVDITSKGKMRARYVNYIKTSEVVRLPYPLQMKSSGPPSYFIKRESWGWTDFLMNPMVMMMVLPLLIFVLLPKVVNTSDPDMRREMEQSMNMLNSNHELPDVSEFMTRLFSSKSSGKSSSGSSKTGKSGAGKRR.

The first 23 residues, 1-23, serve as a signal peptide directing secretion; that stretch reads MAAALWGFFPVLLLLLLSGDVQS. The Lumenal segment spans residues 24-159; the sequence is SEVPGAAAEG…IKRESWGWTD (136 aa). A helical membrane pass occupies residues 160–180; the sequence is FLMNPMVMMMVLPLLIFVLLP. Topologically, residues 181–242 are cytoplasmic; the sequence is KVVNTSDPDM…TGKSGAGKRR (62 aa). The tract at residues 217-242 is disordered; that stretch reads LFSSKSSGKSSSGSSKTGKSGAGKRR. A compositionally biased stretch (low complexity) spans 219–235; sequence SSKSSGKSSSGSSKTGK.

The protein belongs to the EMC7 family. Component of the ER membrane protein complex (EMC).

The protein localises to the endoplasmic reticulum membrane. Its function is as follows. Part of the endoplasmic reticulum membrane protein complex (EMC) that enables the energy-independent insertion into endoplasmic reticulum membranes of newly synthesized membrane proteins. Preferentially accommodates proteins with transmembrane domains that are weakly hydrophobic or contain destabilizing features such as charged and aromatic residues. Involved in the cotranslational insertion of multi-pass membrane proteins in which stop-transfer membrane-anchor sequences become ER membrane spanning helices. It is also required for the post-translational insertion of tail-anchored/TA proteins in endoplasmic reticulum membranes. By mediating the proper cotranslational insertion of N-terminal transmembrane domains in an N-exo topology, with translocated N-terminus in the lumen of the ER, controls the topology of multi-pass membrane proteins like the G protein-coupled receptors. By regulating the insertion of various proteins in membranes, it is indirectly involved in many cellular processes. The sequence is that of Endoplasmic reticulum membrane protein complex subunit 7 (EMC7) from Homo sapiens (Human).